Here is a 548-residue protein sequence, read N- to C-terminus: Fumarate hydratase class I, anaerobic (548 aa).

[4Fe-4S] cluster is bound at residue C105. At K192 the chain carries N6-acetyllysine. Positions 224 and 318 each coordinate [4Fe-4S] cluster.

Belongs to the class-I fumarase family. Homodimer. The cofactor is [4Fe-4S] cluster.

It catalyses the reaction (S)-malate = fumarate + H2O. The enzyme catalyses (S,S)-tartrate = oxaloacetate + H2O. Functionally, catalyzes the reversible hydration of fumarate to (S)-malate. Functions in the generation of fumarate for use as an anaerobic electron acceptor. To a lesser extent, also displays D-tartrate dehydratase activity, but is not able to convert (R)-malate, L-tartrate or meso-tartrate. Is required for anaerobic growth on D-tartrate. The polypeptide is Fumarate hydratase class I, anaerobic (Escherichia coli (strain K12)).